The following is a 23-amino-acid chain: Acetylcholine receptor subunit gamma (23 aa).

Belongs to the ligand-gated ion channel (TC 1.A.9) family. Acetylcholine receptor (TC 1.A.9.1) subfamily. Gamma/CHRNG sub-subfamily. As to quaternary structure, pentamer of two alpha chains, and one each of the beta, delta, and gamma chains.

Its subcellular location is the postsynaptic cell membrane. It is found in the cell membrane. It carries out the reaction K(+)(in) = K(+)(out). The catalysed reaction is Na(+)(in) = Na(+)(out). After binding acetylcholine, the AChR responds by an extensive change in conformation that affects all subunits and leads to opening of an ion-conducting channel across the plasma membrane. This Electrophorus electricus (Electric eel) protein is Acetylcholine receptor subunit gamma (chrng).